We begin with the raw amino-acid sequence, 248 residues long: Triosephosphate isomerase (248 aa).

Residue 9 to 11 coordinates substrate; the sequence is NWK. Catalysis depends on His-94, which acts as the Electrophile. Catalysis depends on Glu-166, which acts as the Proton acceptor. Residues Gly-172, Ser-211, and 232–233 contribute to the substrate site; that span reads GG.

Belongs to the triosephosphate isomerase family. As to quaternary structure, homodimer.

It localises to the cytoplasm. The enzyme catalyses D-glyceraldehyde 3-phosphate = dihydroxyacetone phosphate. The protein operates within carbohydrate biosynthesis; gluconeogenesis. Its pathway is carbohydrate degradation; glycolysis; D-glyceraldehyde 3-phosphate from glycerone phosphate: step 1/1. Functionally, involved in the gluconeogenesis. Catalyzes stereospecifically the conversion of dihydroxyacetone phosphate (DHAP) to D-glyceraldehyde-3-phosphate (G3P). The sequence is that of Triosephosphate isomerase from Vesicomyosocius okutanii subsp. Calyptogena okutanii (strain HA).